The chain runs to 243 residues: Large ribosomal subunit protein uL2 (243 aa).

Residues 1-12 (MGRRIQGQRRGR) are compositionally biased toward basic residues. Disordered regions lie at residues 1–38 (MGRRIQGQRRGRGTSTFRAPSHRYKAELSHKQSESDDT) and 198–243 (VDHP…GSSE). Basic and acidic residues-rich tracts occupy residues 24 to 34 (YKAELSHKQSE) and 221 to 231 (PPGRKVGDIAS).

Belongs to the universal ribosomal protein uL2 family. As to quaternary structure, part of the 50S ribosomal subunit. Forms a bridge to the 30S subunit in the 70S ribosome.

Its function is as follows. One of the primary rRNA binding proteins. Required for association of the 30S and 50S subunits to form the 70S ribosome, for tRNA binding and peptide bond formation. It has been suggested to have peptidyltransferase activity; this is somewhat controversial. Makes several contacts with the 16S rRNA in the 70S ribosome. The polypeptide is Large ribosomal subunit protein uL2 (Haloquadratum walsbyi (strain DSM 16790 / HBSQ001)).